A 526-amino-acid chain; its full sequence is NAD(P)H-quinone oxidoreductase subunit 2 (526 aa).

14 helical membrane-spanning segments follow: residues 16–36, 43–63, 80–100, 107–127, 133–153, 168–188, 211–231, 245–265, 279–299, 307–327, 335–355, 379–399, 401–421, and 469–489; these read ILPESIVILTLIVVLVGDLIV, WIPYAAIAGLLGSVFALYLGW, LSILFRGIIVLSTAFTIMMSV, GTALSEFICILLTATLGGMFL, LVMIFVSLEMLSISSYLLTGY, LLIGAASSAIFLYGVSLLYGL, LALAIALVFAIAGIAFKISAV, PTPVVAFLSVGSKAAGFALAI, WHFIFTALAILSMVLGNVVAL, MLAYSSIAQAGFVMIGLVAGT, IFYLLVYLFMNLGAFTCVILF, LGLSVCLLSLGGIPPLAGFFG, IYLFWAGWQAGLYGLVLLGLI, and LVLSVIITSLAGILSNPLFVI.

It belongs to the complex I subunit 2 family. NDH-1 can be composed of about 15 different subunits; different subcomplexes with different compositions have been identified which probably have different functions.

It is found in the cellular thylakoid membrane. It carries out the reaction a plastoquinone + NADH + (n+1) H(+)(in) = a plastoquinol + NAD(+) + n H(+)(out). The enzyme catalyses a plastoquinone + NADPH + (n+1) H(+)(in) = a plastoquinol + NADP(+) + n H(+)(out). NDH-1 shuttles electrons from an unknown electron donor, via FMN and iron-sulfur (Fe-S) centers, to quinones in the respiratory and/or the photosynthetic chain. The immediate electron acceptor for the enzyme in this species is believed to be plastoquinone. Couples the redox reaction to proton translocation, and thus conserves the redox energy in a proton gradient. Cyanobacterial NDH-1 also plays a role in inorganic carbon-concentration. This chain is NAD(P)H-quinone oxidoreductase subunit 2, found in Picosynechococcus sp. (strain ATCC 27264 / PCC 7002 / PR-6) (Agmenellum quadruplicatum).